Here is a 463-residue protein sequence, read N- to C-terminus: L-seryl-tRNA(Sec) selenium transferase (463 aa).

Residue Lys-295 is modified to N6-(pyridoxal phosphate)lysine.

This sequence belongs to the SelA family. In terms of assembly, homodecamer; pentamer of dimers. Binds only one seryl-tRNA(Sec) per dimer. It depends on pyridoxal 5'-phosphate as a cofactor.

The protein resides in the cytoplasm. The catalysed reaction is L-seryl-tRNA(Sec) + selenophosphate + H(+) = L-selenocysteinyl-tRNA(Sec) + phosphate. Its pathway is aminoacyl-tRNA biosynthesis; selenocysteinyl-tRNA(Sec) biosynthesis; selenocysteinyl-tRNA(Sec) from L-seryl-tRNA(Sec) (bacterial route): step 1/1. Converts seryl-tRNA(Sec) to selenocysteinyl-tRNA(Sec) required for selenoprotein biosynthesis. This Escherichia coli (strain SMS-3-5 / SECEC) protein is L-seryl-tRNA(Sec) selenium transferase.